The chain runs to 259 residues: MINPIALKCGPLAIHWYALCILSGLVLAVYLASKEAPKKGISSDAIFDFILIAFPLAIVGARIYYVIFEWSYYVKHLDEIIAIWNGGIAIYGGLITGALVLLAYCYNKVLNPIHFLDIAAPSVMVAQAIGRWGNFINQEAYGKAVSQLNYLPSFIQKQMFIEGSYRIPTFLYESLWNLLGFVIIMMWRRKPKSLLDGEIFAFYLIWYGSGRLVIEGMRTDSLMFLGIRISQYVSALLIIIGLIFVIKRRRQKGISYYQE.

The next 4 helical transmembrane spans lie at 12-32, 41-61, 80-100, and 109-129; these read LAIH…VYLA, ISSD…IVGA, IIAI…GALV, and VLNP…AQAI. Position 131 (R131) interacts with a 1,2-diacyl-sn-glycero-3-phospho-(1'-sn-glycerol). Helical transmembrane passes span 167–187, 194–214, and 226–246; these read IPTF…IMMW, LLDG…RLVI, and GIRI…IFVI.

It belongs to the Lgt family.

It localises to the cell membrane. It carries out the reaction L-cysteinyl-[prolipoprotein] + a 1,2-diacyl-sn-glycero-3-phospho-(1'-sn-glycerol) = an S-1,2-diacyl-sn-glyceryl-L-cysteinyl-[prolipoprotein] + sn-glycerol 1-phosphate + H(+). Its pathway is protein modification; lipoprotein biosynthesis (diacylglyceryl transfer). In terms of biological role, catalyzes the transfer of the diacylglyceryl group from phosphatidylglycerol to the sulfhydryl group of the N-terminal cysteine of a prolipoprotein, the first step in the formation of mature lipoproteins. The protein is Phosphatidylglycerol--prolipoprotein diacylglyceryl transferase of Streptococcus pyogenes serotype M49 (strain NZ131).